Reading from the N-terminus, the 319-residue chain is L-lactate dehydrogenase (319 aa).

NAD(+) is bound by residues Val-17, Asp-38, Lys-43, Tyr-69, and 83–84; that span reads GA. Substrate is bound by residues Gln-86 and Arg-92. NAD(+) is bound by residues Thr-105, 122 to 124, and Ser-147; that span reads ATN. 124 to 127 is a substrate binding site; it reads NPVD. 152 to 155 is a binding site for substrate; that stretch reads DTAR. Beta-D-fructose 1,6-bisphosphate is bound by residues Arg-157 and His-172. Catalysis depends on His-179, which acts as the Proton acceptor. Tyr-224 carries the post-translational modification Phosphotyrosine. Residue Thr-233 coordinates substrate.

This sequence belongs to the LDH/MDH superfamily. LDH family. Homotetramer.

The protein resides in the cytoplasm. The enzyme catalyses (S)-lactate + NAD(+) = pyruvate + NADH + H(+). It participates in fermentation; pyruvate fermentation to lactate; (S)-lactate from pyruvate: step 1/1. With respect to regulation, allosterically activated by fructose 1,6-bisphosphate (FBP). Its function is as follows. Catalyzes the conversion of lactate to pyruvate. The sequence is that of L-lactate dehydrogenase from Geobacillus sp. (strain WCH70).